The following is a 99-amino-acid chain: MKGQSMILKDLAAELEEVVSPINLDCEEEIETEEVDCPAPFAVEAVCHVCEQVLRLAVVASPDGILQLQQLLLTDSLSFLCTSCSREAFCNRRPQRNGS.

The interval 1–37 (MKGQSMILKDLAAELEEVVSPINLDCEEEIETEEVDC) is E7 terminal domain. Residues 24–28 (LDCEE) carry the LXCXE motif; interaction with host RB1 and TMEM173/STING motif. Residues 47–84 (CHVCEQVLRLAVVASPDGILQLQQLLLTDSLSFLCTSC) fold into a zinc finger. The Nuclear export signal motif lies at 65-73 (ILQLQQLLL).

This sequence belongs to the papillomaviridae E7 protein family. Homodimer. Homooligomer. Interacts with host RB1; this interaction induces dissociation of RB1-E2F1 complex thereby disrupting RB1 activity. Interacts with host EP300; this interaction represses EP300 transcriptional activity. Interacts with protein E2; this interaction inhibits E7 oncogenic activity. Interacts with host TMEM173/STING; this interaction impairs the ability of TMEM173/STING to sense cytosolic DNA and promote the production of type I interferon (IFN-alpha and IFN-beta). Highly phosphorylated.

The protein localises to the host cytoplasm. It is found in the host nucleus. Functionally, plays a role in viral genome replication by driving entry of quiescent cells into the cell cycle. Stimulation of progression from G1 to S phase allows the virus to efficiently use the cellular DNA replicating machinery to achieve viral genome replication. E7 protein has both transforming and trans-activating activities. Induces the disassembly of the E2F1 transcription factor from RB1, with subsequent transcriptional activation of E2F1-regulated S-phase genes. Interferes with host histone deacetylation mediated by HDAC1 and HDAC2, leading to transcription activation. Also plays a role in the inhibition of both antiviral and antiproliferative functions of host interferon alpha. Interaction with host TMEM173/STING impairs the ability of TMEM173/STING to sense cytosolic DNA and promote the production of type I interferon (IFN-alpha and IFN-beta). In Bos taurus papillomavirus 6 (Bovine papillomavirus 6), this protein is Protein E7.